A 273-amino-acid chain; its full sequence is Aquaporin NIP1-4 (273 aa).

2 helical membrane-spanning segments follow: residues 59–79 and 86–106; these read LLAE…AITV and VTFP…VYAV. The NPA 1 motif lies at 115–117; sequence NPA. A run of 3 helical transmembrane segments spans residues 133-155, 174-194, and 198-218; these read APAY…RLMF, SLVI…AVAT, and AVGH…VLFA. The NPA 2 motif lies at 227–229; it reads NPA. The chain crosses the membrane as a helical span at residues 245–265; that stretch reads WVYILGPFAGAAAGAWAYSLI.

It belongs to the MIP/aquaporin (TC 1.A.8) family. NIP (TC 1.A.8.12) subfamily. As to expression, expressed in leaves.

It is found in the membrane. Functionally, aquaporins facilitate the transport of water and small neutral solutes across cell membranes. The polypeptide is Aquaporin NIP1-4 (NIP1-4) (Oryza sativa subsp. japonica (Rice)).